The primary structure comprises 157 residues: Putative pre-16S rRNA nuclease (157 aa).

Belongs to the YqgF nuclease family.

The protein resides in the cytoplasm. In terms of biological role, could be a nuclease involved in processing of the 5'-end of pre-16S rRNA. The sequence is that of Putative pre-16S rRNA nuclease from Parasynechococcus marenigrum (strain WH8102).